The primary structure comprises 138 residues: Large-conductance mechanosensitive channel (138 aa).

Helical transmembrane passes span 19–39, 40–60, and 81–101; these read VGVI…GDII, MPII…IPLA, and GSFL…FMVI.

Belongs to the MscL family. As to quaternary structure, homopentamer.

It is found in the cell inner membrane. Its function is as follows. Channel that opens in response to stretch forces in the membrane lipid bilayer. May participate in the regulation of osmotic pressure changes within the cell. This is Large-conductance mechanosensitive channel from Bradyrhizobium sp. (strain ORS 278).